The primary structure comprises 311 residues: tRNA-cytidine(32) 2-sulfurtransferase (311 aa).

The PP-loop motif motif lies at 47-52 (SGGKDS). Cys122, Cys125, and Cys213 together coordinate [4Fe-4S] cluster.

This sequence belongs to the TtcA family. As to quaternary structure, homodimer. Mg(2+) is required as a cofactor. The cofactor is [4Fe-4S] cluster.

The protein resides in the cytoplasm. It catalyses the reaction cytidine(32) in tRNA + S-sulfanyl-L-cysteinyl-[cysteine desulfurase] + AH2 + ATP = 2-thiocytidine(32) in tRNA + L-cysteinyl-[cysteine desulfurase] + A + AMP + diphosphate + H(+). The protein operates within tRNA modification. Its function is as follows. Catalyzes the ATP-dependent 2-thiolation of cytidine in position 32 of tRNA, to form 2-thiocytidine (s(2)C32). The sulfur atoms are provided by the cysteine/cysteine desulfurase (IscS) system. This is tRNA-cytidine(32) 2-sulfurtransferase from Shigella boydii serotype 18 (strain CDC 3083-94 / BS512).